Consider the following 347-residue polypeptide: UDP-N-acetylenolpyruvoylglucosamine reductase (347 aa).

The FAD-binding PCMH-type domain maps to 27–197 (LPARAQRLAR…TGIELRLNKM (171 aa)). The active site involves arginine 173. Serine 247 functions as the Proton donor in the catalytic mechanism. Glutamate 342 is an active-site residue.

Belongs to the MurB family. FAD is required as a cofactor.

The protein resides in the cytoplasm. The catalysed reaction is UDP-N-acetyl-alpha-D-muramate + NADP(+) = UDP-N-acetyl-3-O-(1-carboxyvinyl)-alpha-D-glucosamine + NADPH + H(+). It participates in cell wall biogenesis; peptidoglycan biosynthesis. In terms of biological role, cell wall formation. In Alcanivorax borkumensis (strain ATCC 700651 / DSM 11573 / NCIMB 13689 / SK2), this protein is UDP-N-acetylenolpyruvoylglucosamine reductase.